The sequence spans 322 residues: Probable uridine nucleosidase 2 (322 aa).

Active-site residues include D14 and H246.

The protein belongs to the IUNH family. In terms of assembly, component of the NSH heterocomplex made of URH1/NSH1 and URH2/NSH2 which exhibits strong xanthosine nucleosidase activity. Interacts with URH1. As to expression, expressed in roots, seedlings and flowers.

It is found in the cytoplasm. The protein resides in the cytosol. It catalyses the reaction uridine + H2O = D-ribose + uracil. The enzyme catalyses inosine + H2O = hypoxanthine + D-ribose. The catalysed reaction is xanthosine + H2O = D-ribose + xanthine. Functionally, involved in pyrimidine breakdown, especially in response to dark stress. In the presence of URH1, exhibits efficient inosine and xanthosine hydrolytic activities. Support inosine breakdown especially during the late phase of senescence. This chain is Probable uridine nucleosidase 2, found in Arabidopsis thaliana (Mouse-ear cress).